The chain runs to 295 residues: Spermatogenesis-associated protein 4 (295 aa).

Residues 1–34 form a disordered region; that stretch reads MAAAGQAEECLPLPAAESSKTSLPTPPAVPAGKK. A Calponin-homology (CH) domain is found at 48 to 154; sequence SRLSRSVLRW…QEIYTLLTHQ (107 aa). A disordered region spans residues 251–295; sequence KRRYKSRGSKEKAAQPLSKSDNDGNARKEIHVKQSGNPCENTENL. Positions 270–282 are enriched in basic and acidic residues; it reads SDNDGNARKEIHV. Residues 284–295 show a composition bias toward polar residues; the sequence is QSGNPCENTENL.

In terms of tissue distribution, testis.

It localises to the nucleus. Functionally, may play a role in apoptosis regulation. The sequence is that of Spermatogenesis-associated protein 4 (Spata4) from Mus musculus (Mouse).